The chain runs to 206 residues: Potassium channel B446_29190 (206 aa).

Position 1 (M1) is a topological domain, cytoplasmic. A helical membrane pass occupies residues 2 to 25; that stretch reads NESGRVEAFSDGVFAIAITLLILD. The RxxxFSD motif signature appears at 6-12; that stretch reads RVEAFSD. Residues 26–44 lie on the Extracellular side of the membrane; that stretch reads IKVPKADGPGGLWHALGAQ. The short helix H1 stretch occupies residues 31-34; it reads ADGP. Residues 36 to 42 are short helix H2; it reads GLWHALG. Residues 45 to 70 form a helical membrane-spanning segment; the sequence is WPSYAAYVVSFLVIGIMWVNHHQVFS. Over 71–76 the chain is Cytoplasmic; that stretch reads YVARVD. Residues 77–102 traverse the membrane as a helical segment; it reads RALMFLNLLVLMVVAAVPWPTAMLAE. Residues 103-110 are Extracellular-facing; the sequence is YLREDRAS. The chain crosses the membrane as a helical span at residues 111-135; it reads HVAAAVYSLVMVAMALAFQALWWHL. At 136–147 the chain is on the cytoplasmic side; sequence TRTGHLFDPRVD. The chain crosses the membrane as a helical span at residues 148–174; the sequence is APAARATRIRFALGSLGYPLTVGLAFV. Topologically, residues 175-176 are extracellular; that stretch reads SA. The helical transmembrane segment at 177-192 threads the bilayer; it reads PLTLAAHGLLALYYGF. Over 193-206 the chain is Cytoplasmic; it reads NQVPVPTREAAAPS.

This sequence belongs to the TMEM175 family. As to quaternary structure, homotetramer.

It is found in the membrane. It carries out the reaction K(+)(in) = K(+)(out). Its function is as follows. Potassium channel. This Streptomyces collinus (strain DSM 40733 / Tue 365) protein is Potassium channel B446_29190.